A 284-amino-acid chain; its full sequence is Probable endonuclease 4 (284 aa).

His66, His106, Glu142, Asp176, His179, His213, Asp226, His228, and Glu258 together coordinate Zn(2+).

It belongs to the AP endonuclease 2 family. Requires Zn(2+) as cofactor.

The catalysed reaction is Endonucleolytic cleavage to 5'-phosphooligonucleotide end-products.. Functionally, endonuclease IV plays a role in DNA repair. It cleaves phosphodiester bonds at apurinic or apyrimidinic (AP) sites, generating a 3'-hydroxyl group and a 5'-terminal sugar phosphate. This Natranaerobius thermophilus (strain ATCC BAA-1301 / DSM 18059 / JW/NM-WN-LF) protein is Probable endonuclease 4.